The chain runs to 367 residues: Phosphoribosylaminoimidazole-succinocarboxamide synthase (367 aa).

The protein belongs to the SAICAR synthetase family.

It carries out the reaction 5-amino-1-(5-phospho-D-ribosyl)imidazole-4-carboxylate + L-aspartate + ATP = (2S)-2-[5-amino-1-(5-phospho-beta-D-ribosyl)imidazole-4-carboxamido]succinate + ADP + phosphate + 2 H(+). It functions in the pathway purine metabolism; IMP biosynthesis via de novo pathway; 5-amino-1-(5-phospho-D-ribosyl)imidazole-4-carboxamide from 5-amino-1-(5-phospho-D-ribosyl)imidazole-4-carboxylate: step 1/2. This Shewanella sp. (strain W3-18-1) protein is Phosphoribosylaminoimidazole-succinocarboxamide synthase.